Reading from the N-terminus, the 482-residue chain is Docking protein 1 (482 aa).

Methionine 1 carries the post-translational modification N-acetylmethionine. The 116-residue stretch at 4 to 119 folds into the PH domain; the sequence is AVMEGPLFLQ…WVQTLCRTAF (116 aa). Serine 48 is modified (phosphoserine). The 109-residue stretch at 151–259 folds into the IRS-type PTB domain; it reads EGSQFWVTSQ…QQQKAQGKVG (109 aa). Phosphoserine is present on residues serine 269 and serine 290. Positions 269–328 are disordered; sequence SHDGETEGKTVPPPVPQDPLGSPPALYAEPLDSLRIPPGPSQDSVYSDPLGSTPAGAGEG. Tyrosine 295, tyrosine 336, tyrosine 340, tyrosine 361, and tyrosine 376 each carry phosphotyrosine. Residues 353-373 form a disordered region; it reads TDSKEDPIYDEPEGLAPAPPR. Residue tyrosine 397 is modified to Phosphotyrosine; by INSR. The segment at 398–482 is disordered; it reads ELPYNPATDD…RAGVKSEGST (85 aa). Tyrosine 408 carries the phosphotyrosine modification. Residues 410–423 are compositionally biased toward pro residues; it reads VPPPRSPKPAPAPK. A Phosphoserine modification is found at serine 415. Residues 432-459 show a composition bias toward polar residues; it reads SGTTRGSGSKGFSSDTALYSQVQKSGTS. A Phosphotyrosine modification is found at tyrosine 450.

Belongs to the DOK family. Type A subfamily. Interacts with RasGAP, INPP5D/SHIP1 and ABL1. Interacts directly with phosphorylated ITGB3. Interacts with SRMS (via the SH2 and SH3 domains). Post-translationally, constitutively tyrosine-phosphorylated. Phosphorylated by TEC. Phosphorylated on tyrosine residues by the insulin receptor kinase. Results in the negative regulation of the insulin signaling pathway. Phosphorylated by LYN. Phosphorylated on tyrosine residues by SRMS. As to expression, expressed in lung, spleen, skeletal muscle and kidney.

It is found in the cytoplasm. Its subcellular location is the nucleus. In terms of biological role, DOK proteins are enzymatically inert adaptor or scaffolding proteins. They provide a docking platform for the assembly of multimolecular signaling complexes. DOK1 appears to be a negative regulator of the insulin signaling pathway. Modulates integrin activation by competing with talin for the same binding site on ITGB3. This chain is Docking protein 1 (Dok1), found in Mus musculus (Mouse).